The chain runs to 576 residues: uncharacterized protein (576 aa).

It belongs to the chlamydial CPn_0065/CT_288/TC_0561 family.

This is an uncharacterized protein from Chlamydia pneumoniae (Chlamydophila pneumoniae).